We begin with the raw amino-acid sequence, 165 residues long: Pyruvoyl-dependent arginine decarboxylase 1 (165 aa).

A Pyruvic acid (Ser) modification is found at Ser-45.

This sequence belongs to the PdaD family. It depends on pyruvate as a cofactor.

It carries out the reaction L-arginine + H(+) = agmatine + CO2. This is Pyruvoyl-dependent arginine decarboxylase 1 (pdaD1) from Methanosarcina acetivorans (strain ATCC 35395 / DSM 2834 / JCM 12185 / C2A).